A 471-amino-acid chain; its full sequence is Lincomycin resistance protein LmrB (471 aa).

13 helical membrane-spanning segments follow: residues 15-34, 55-77, 82-104, 111-131, 141-163, 170-187, 202-224, 231-253, 268-290, 297-319, 329-351, 358-380, and 445-467; these read PIIASFLMAGFIGLFSETAL, LTTGYLLTLGILVPISGLLLQWF, LFFTAVSFSIAGTLIAALSPTFA, VVQAVGTALLLPLMFNTILLI, MGMIGLVIMFAPAVGPTISGLIL, WIFWISLPFLIIALLFGM, DILSIILSTLGFGGVVFAFSSAG, ATVLVSIIVGGIALGLFVWRQLT, MFTLGLILVFISFMMILSTMILL, SLALAAFSAGLVLLPGGVLNGLM, AYGPRALVIPGFIVAVIALFFLT, SALTIIVLHSVLMIGISMVMMPA, and GIQNAFVFGLIMACIGLLCSLFI.

Belongs to the major facilitator superfamily. EmrB family.

The protein resides in the cell membrane. Its function is as follows. Proton-dependent transporter. May mediate the efflux of lincomycin. The chain is Lincomycin resistance protein LmrB (lmrB) from Listeria innocua serovar 6a (strain ATCC BAA-680 / CLIP 11262).